A 107-amino-acid chain; its full sequence is ATPase inhibitor, mitochondrial (107 aa).

The N-terminal 25 residues, 1–25 (MAGSALAVRARLGVWGMRVLQTRGF), are a transit peptide targeting the mitochondrion. The interval 25–58 (FGSDSSESMDSGAGSIREAGGAFGKREKAEEDRY) is disordered. The N-terminal inhibitory region stretch occupies residues 26–52 (GSDSSESMDSGAGSIREAGGAFGKREK). At Ser39 the chain carries Phosphoserine. Basic and acidic residues predominate over residues 48–58 (GKREKAEEDRY). Residues 60–107 (REKTREQLAALKKHHEDEIDHHSKEIERLQKQIERHKKKIKYLKNSEH) adopt a coiled-coil conformation. The antiparallel alpha-helical coiled coil region stretch occupies residues 74 to 106 (HEDEIDHHSKEIERLQKQIERHKKKIKYLKNSE). Lys103 is subject to N6-succinyllysine.

This sequence belongs to the ATPase inhibitor family. In terms of assembly, homodimer; represents the active form and is present at a pH value below 6.5. Homotetramer; represents the inactive form and is present at a pH value above 7.0.

The protein localises to the mitochondrion. Its function is as follows. Endogenous F(1)F(o)-ATPase inhibitor limiting ATP depletion when the mitochondrial membrane potential falls below a threshold and the F(1)F(o)-ATP synthase starts hydrolyzing ATP to pump protons out of the mitochondrial matrix. Required to avoid the consumption of cellular ATP when the F(1)F(o)-ATP synthase enzyme acts as an ATP hydrolase. Indirectly acts as a regulator of heme synthesis in erythroid tissues: regulates heme synthesis by modulating the mitochondrial pH and redox potential, allowing FECH to efficiently catalyze the incorporation of iron into protoporphyrin IX to produce heme. The chain is ATPase inhibitor, mitochondrial from Rattus norvegicus (Rat).